A 47-amino-acid chain; its full sequence is MQVYCNVLCRCGRGADVLRDRVGPRTKRANQASPPVGRHSSRLMCPG.

The interval 22-47 (VGPRTKRANQASPPVGRHSSRLMCPG) is disordered.

This is an uncharacterized protein from Saccharomyces cerevisiae (strain ATCC 204508 / S288c) (Baker's yeast).